We begin with the raw amino-acid sequence, 473 residues long: Reticulon-4 receptor (473 aa).

An N-terminal signal peptide occupies residues 1 to 26 (MKRASSGGSRLLAWVLWLQAWRVATP). Intrachain disulfides connect Cys27/Cys33 and Cys31/Cys43. In terms of domain architecture, LRRNT spans 27–57 (CPGACVCYNEPKVTTSCPQQGLQAVPTGIPA). LRR repeat units follow at residues 56 to 79 (PASSQRIFLHGNRISYVPAASFQS), 80 to 103 (CRNLTILWLHSNALAGIDAAAFTG), 105 to 128 (TLLEQLDLSDNAQLRVVDPTTFRG), 129 to 152 (LGHLHTLHLDRCGLQELGPGLFRG), 153 to 176 (LAALQYLYLQDNNLQALPDNTFRD), 178 to 200 (GNLTHLFLHGNRIPSVPEHAFRG), 202 to 224 (HSLDRLLLHQNHVARVHPHAFRD), 225 to 248 (LGRLMTLYLFANNLSMLPAEVLVP), and 250 to 273 (RSLQYLRLNDNPWVCDCRARPLWA). Residue Asn82 is glycosylated (N-linked (GlcNAc...) asparagine). In terms of domain architecture, LRRCT spans 260–310 (NPWVCDCRARPLWAWLQKFRGSSSEVPCNLPQRLAGRDLKRLAASDLEGCA). 3 cysteine pairs are disulfide-bonded: Cys264–Cys287, Cys266–Cys335, and Cys309–Cys336. The interval 346–446 (VLEPGRPASA…GSSGTGDAEG (101 aa)) is disordered. A glycan (N-linked (GlcNAc...) asparagine) is linked at Asn372. A compositionally biased stretch (basic residues) spans 413-429 (PRRRPGCSRKNRTRSHC). Over residues 434-445 (AGSGSSGTGDAE) the composition is skewed to gly residues. Ser447 carries GPI-anchor amidated serine lipidation. A propeptide spans 448–473 (GALPALACSLAPLGLALVLWTVLGPC) (removed in mature form).

The protein belongs to the Nogo receptor family. Homodimer. Interacts with MAG. Interacts with RTN4 and OMG. Interacts with LINGO1 and NGFR. Interacts with KIAA0319L. Interacts with OLFM1; this inhibits interaction with LINGO1 and NGFR. Post-translationally, N-glycosylated. O-glycosylated. Contains terminal sialic acid groups on its glycan chains. As to expression, detected in embryonic cerebellum, in spinal cord motor neurons and in dorsal root ganglia. Detected in adult brain, in neocortex, hippocampus, striatum, thalamus and dorsal root ganglion neurons (at protein level).

Its subcellular location is the cell membrane. It is found in the membrane raft. The protein localises to the cell projection. The protein resides in the dendrite. It localises to the perikaryon. Its subcellular location is the axon. Functionally, receptor for RTN4, OMG and MAG. Functions as a receptor for the sialylated gangliosides GT1b and GM1. Besides, functions as a receptor for chondroitin sulfate proteoglycans. Can also bind heparin. Intracellular signaling cascades are triggered via the coreceptor NGFR. Signaling mediates activation of Rho and downstream reorganization of the actin cytoskeleton. Mediates axonal growth inhibition. May play a role in regulating axon regeneration and neuronal plasticity in the adult central nervous system. Plays a role in postnatal brain development. Required for normal axon migration across the brain midline and normal formation of the corpus callosum. Protects motoneurons against apoptosis; protection against apoptosis is probably mediated via interaction with MAG. Acts in conjunction with RTN4 and LINGO1 in regulating neuronal precursor cell motility during cortical development. Like other family members, plays a role in restricting the number dendritic spines and the number of synapses that are formed during brain development. This is Reticulon-4 receptor (Rtn4r) from Rattus norvegicus (Rat).